Reading from the N-terminus, the 318-residue chain is uncharacterized protein (318 aa).

It belongs to the NAD(P)-dependent epimerase/dehydratase family.

This is an uncharacterized protein from Staphylococcus haemolyticus (strain JCSC1435).